The sequence spans 119 residues: Protein TusC (119 aa).

It belongs to the DsrF/TusC family. In terms of assembly, heterohexamer, formed by a dimer of trimers. The hexameric TusBCD complex contains 2 copies each of TusB, TusC and TusD. The TusBCD complex interacts with TusE.

Its subcellular location is the cytoplasm. In terms of biological role, part of a sulfur-relay system required for 2-thiolation of 5-methylaminomethyl-2-thiouridine (mnm(5)s(2)U) at tRNA wobble positions. The sequence is that of Protein TusC from Buchnera aphidicola subsp. Acyrthosiphon pisum (strain 5A).